The sequence spans 545 residues: Hydroxylamine reductase (545 aa).

[4Fe-4S] cluster contacts are provided by cysteine 3, cysteine 6, cysteine 15, and cysteine 21. The hybrid [4Fe-2O-2S] cluster site is built by histidine 241, glutamate 265, cysteine 309, cysteine 396, cysteine 424, cysteine 449, glutamate 483, and lysine 485. Cysteine 396 is modified (cysteine persulfide).

The protein belongs to the HCP family. It depends on [4Fe-4S] cluster as a cofactor. Hybrid [4Fe-2O-2S] cluster is required as a cofactor.

The protein localises to the cytoplasm. It catalyses the reaction A + NH4(+) + H2O = hydroxylamine + AH2 + H(+). Functionally, catalyzes the reduction of hydroxylamine to form NH(3) and H(2)O. This is Hydroxylamine reductase from Zymomonas mobilis subsp. mobilis (strain ATCC 31821 / ZM4 / CP4).